The chain runs to 74 residues: Tetrahydromethanopterin S-methyltransferase subunit G (74 aa).

A helical transmembrane segment spans residues valine 47 to leucine 67.

Belongs to the MtrG family. In terms of assembly, the complex is composed of 8 subunits; MtrA, MtrB, MtrC, MtrD, MtrE, MtrF, MtrG and MtrH.

Its subcellular location is the cell membrane. It carries out the reaction 5-methyl-5,6,7,8-tetrahydromethanopterin + coenzyme M + 2 Na(+)(in) = 5,6,7,8-tetrahydromethanopterin + methyl-coenzyme M + 2 Na(+)(out). Its pathway is one-carbon metabolism; methanogenesis from CO(2); methyl-coenzyme M from 5,10-methylene-5,6,7,8-tetrahydromethanopterin: step 2/2. Its function is as follows. Part of a complex that catalyzes the formation of methyl-coenzyme M and tetrahydromethanopterin from coenzyme M and methyl-tetrahydromethanopterin. This is an energy-conserving, sodium-ion translocating step. The chain is Tetrahydromethanopterin S-methyltransferase subunit G from Methanococcus maripaludis (strain DSM 14266 / JCM 13030 / NBRC 101832 / S2 / LL).